We begin with the raw amino-acid sequence, 379 residues long: 2-methylcitrate synthase (379 aa).

His-187 is a substrate binding site. The active site involves His-222. 264 to 268 is a binding site for CoA; sequence KVMGF. Residue His-270 is part of the active site. Arg-279 provides a ligand contact to substrate. Residue Asp-321 is part of the active site. 2 residues coordinate substrate: Arg-346 and Arg-365.

It belongs to the citrate synthase family. As to quaternary structure, homodimer.

The catalysed reaction is propanoyl-CoA + oxaloacetate + H2O = (2S,3S)-2-methylcitrate + CoA + H(+). The enzyme catalyses oxaloacetate + acetyl-CoA + H2O = citrate + CoA + H(+). It participates in organic acid metabolism; propanoate degradation. It functions in the pathway carbohydrate metabolism; tricarboxylic acid cycle; isocitrate from oxaloacetate: step 1/2. Functionally, involved in the catabolism of short chain fatty acids (SCFA) via the tricarboxylic acid (TCA)(acetyl degradation route) and via the 2-methylcitrate cycle I (propionate degradation route). Catalyzes the Claisen condensation of propionyl-CoA and oxaloacetate (OAA) to yield 2-methylcitrate (2-MC) and CoA. Also catalyzes the condensation of oxaloacetate with acetyl-CoA but with a lower specificity. In Antarctic bacterium DS2-3R, this protein is 2-methylcitrate synthase (gltA).